Reading from the N-terminus, the 510-residue chain is Protein phosphatase EYA3 (510 aa).

Disordered stretches follow at residues 1–32 (MQEP…SNLS) and 175–233 (YQTE…DASS). The span at 7–16 (QTLSQVNNPD) shows a compositional bias: polar residues. Residues 192-203 (LPSDSSASPPLS) are compositionally biased toward low complexity. A phosphoserine mark is found at S199 and S203. The active-site Nucleophile is the D246. The Mg(2+) site is built by D246 and D248. D248 (proton donor) is an active-site residue. A phosphoserine mark is found at S375 and S409. Residue D474 coordinates Mg(2+).

It belongs to the HAD-like hydrolase superfamily. EYA family. As to quaternary structure, interacts with SIX1 and DACH1, and probably SIX2, SIX4 and SIX5. Mg(2+) serves as cofactor. In terms of processing, ser-203 phosphorylation is required for localization at sites of DNA damage and directing interaction with H2AX. In terms of tissue distribution, expressed in branchial arches, CNS and developing eye.

The protein localises to the cytoplasm. It localises to the nucleus. It carries out the reaction O-phospho-L-tyrosyl-[protein] + H2O = L-tyrosyl-[protein] + phosphate. In terms of biological role, tyrosine phosphatase that specifically dephosphorylates 'Tyr-142' of histone H2AX (H2AXY142ph). 'Tyr-142' phosphorylation of histone H2AX plays a central role in DNA repair and acts as a mark that distinguishes between apoptotic and repair responses to genotoxic stress. Promotes efficient DNA repair by dephosphorylating H2AX, promoting the recruitment of DNA repair complexes containing MDC1. Its function as histone phosphatase probably explains its role in transcription regulation during organogenesis. The phosphatase activity has been shown in vitro. Coactivates SIX1. Seems to coactivate SIX2, SIX4 and SIX5. The repression of precursor cell proliferation in myoblasts by SIX1 is switched to activation through recruitment of EYA3 to the SIX1-DACH1 complex and seems to be dependent on EYA3 phosphatase activity. May be involved in development of the eye. May play a role in mediating the induction and differentiation of cranial placodes. This Mus musculus (Mouse) protein is Protein phosphatase EYA3 (Eya3).